Reading from the N-terminus, the 655-residue chain is Serine/threonine-protein kinase SKM1 (655 aa).

The PH domain maps to 3-118 (GVKKEGWISY…WLDAIFAKCP (116 aa)). The region spanning 123 to 136 (VSSPTNFTHKVHVG) is the CRIB domain. Composition is skewed to basic and acidic residues over residues 265–276 (EEGRVHVSKEST) and 318–327 (KNHDSKTKWH). Residues 265–327 (EEGRVHVSKE…KNHDSKTKWH (63 aa)) are disordered. The region spanning 360 to 639 (FQLVEKAGQG…VRKLLTFEFL (280 aa)) is the Protein kinase domain. ATP is bound by residues 366–374 (AGQGASGAV) and K406. D507 serves as the catalytic Proton acceptor.

This sequence belongs to the protein kinase superfamily. STE Ser/Thr protein kinase family. STE20 subfamily.

It catalyses the reaction L-seryl-[protein] + ATP = O-phospho-L-seryl-[protein] + ADP + H(+). The catalysed reaction is L-threonyl-[protein] + ATP = O-phospho-L-threonyl-[protein] + ADP + H(+). May be involved in cellular signaling or cytoskeletal functions. May play a role in morphogenetic control. The polypeptide is Serine/threonine-protein kinase SKM1 (SKM1) (Saccharomyces cerevisiae (strain ATCC 204508 / S288c) (Baker's yeast)).